The chain runs to 312 residues: Malate dehydrogenase (312 aa).

NAD(+) is bound by residues 12-17 (GAGFTG) and Asp-36. The substrate site is built by Arg-87 and Arg-93. NAD(+) contacts are provided by residues Asn-100 and 123–125 (LTN). Asn-125 serves as a coordination point for substrate. Ser-149 carries the phosphoserine modification. Arg-156 contacts substrate. The active-site Proton acceptor is the His-180.

The protein belongs to the LDH/MDH superfamily. MDH type 3 family.

It catalyses the reaction (S)-malate + NAD(+) = oxaloacetate + NADH + H(+). Functionally, catalyzes the reversible oxidation of malate to oxaloacetate. This Bacillus cereus (strain ZK / E33L) protein is Malate dehydrogenase.